A 1767-amino-acid polypeptide reads, in one-letter code: MNKGLFEKRCKYSIRKFSLGVASVMIGATFFGTSPVLADSVQSGSTANLPADLATALATAKENDGHDFEAPKVGEDQGSPEVTDGPKTEEELLALEKEKPAEEKPKEDKPAAAKPETPKTVTPEWQTVEKKEQQGTVTIREEKGVRYNQLSSTAQNDNAGKPALFEKKGLTVDANGNATVDLTFKDDSEKGKSRFGVFLKFKDTKNNVFVGYDKDGWFWEYKSPTTSTWYRGSRVAAPETGSTNRLSITLKSDGQLNASNNDVNLFDTVTLPAAVNDHLKNEKKILLKAGSYDDERTVVSVKTDNQEGVKTEDTPAEKETGPEVDDSKVTYDTIQSKVLKAVIDQAFPRVKEYSLNGHTLPGQVQQFNQVFINNHRITPEVTYKKINETTAEYLMKLRDDAHLINAEMTVRLQVVDNQLHFDVTKIVNHNQVTPGQKIDDERKLLSSISFLGNALVSVSSDQTGAKFDGATMSNNTHVSGDDHIDVTNPMKDLAKGYMYGFVSTDKLAAGVWSNSQNSYGGGSNDWTRLTAYKETVGNANYVGIHSSEWQWEKAYKGIVFPEYTKELPSAKVVITEDANADKKVDWQDGAIAYRSIMNNPQGWKKVKDITAYRIAMNFGSQAQNPFLMTLDGIKKINLHTDGLGQGVLLKGYGSEGHDSGHLNYADIGKRIGGVEDFKTLIEKAKKYGAHLGIHVNASETYPESKYFNEKILRKNPDGSYSYGWNWLDQGINIDAAYDLAHGRLARWEDLKKKLGDGLDFIYVDVWGNGQSGDNGAWATHVLAKEINKQGWRFAIEWGHGGEYDSTFHHWAADLTYGGYTNKGINSAITRFIRNHQKDAWVGDYRSYGGAANYPLLGGYSMKDFEGWQGRSDYNGYVTNLFAHDVMTKYFQHFTVSKWENGTPVTMTDNGSTYKWTPEMRVELVDADNNKVVVTRKSNDVNSPQYRERTVTLNGRVIQDGSAYLTPWNWDANGKKLSTDKEKMYYFNTQAGATTWTLPSDWAKSKVYLYKLTDQGKTEEQELTVKDGKITLDLLANQPYVLYRSKQTNPEMSWSEGMHIYDQGFNSGTLKHWTISGDASKAEIVKSQGANDMLRIQGNKEKVSLTQKLTGLKPNTKYAVYVGVDNRSNAKASITVNTGEKEVTTYTNKSLALNYVKAYAHNTRRNNATVDDTSYFQNMYAFFTTGSDVSNVTLTLSREAGDEATYFDEIRTFENNSSMYGDKHDTGKGTFKQDFENVAQGIFPFVVGGVEGVEDNRTHLSEKHDPYTQRGWNGKKVDDVIEGNWSLKTNGLVSRRNLVYQTIPQNFRFEAGKTYRVTFEYEAGSDNTYAFVVGKGEFQSGRRGTQASNLEMHELPNTWTDSKKAKKATFLVTGAETGDTWVGIYSTGNASNTRGDSGGNANFRGYNDFMMDNLQIEEITLTGKMLTENALKNYLPTVAMTNYTKESMDALKEAVFNLSQADDDISVEEARAEIAKIEALKNALVQKKTALVADDFASLTAPAQAQEGLANAFDGNLSSLWHTSWGGGDVGKPATMVLKEATEITGLRYVPRGSGSNGNLRDVKLVVTDESGKEHTFTATDWPDNNKPKDIDFGKTIKAKKIVLTGTKTYGDGGDKYQSAAELIFTRPQVAETPLDLSGYEAALAKAQKLTDKDNQEEVASVQASMKYATDNHLLTERMVEYFADYLNQLKDSATKPDAPTVEKPEFKLSSVASDQGKTPDYKQEIARPETPEQILPATGESQFDTALFLASVSLALSALFVVKTKKD.

Positions 1–39 (MNKGLFEKRCKYSIRKFSLGVASVMIGATFFGTSPVLAD) are cleaved as a signal peptide. 2 stretches are compositionally biased toward basic and acidic residues: residues 63-75 (NDGHDFEAPKVGE) and 84-111 (DGPKTEEELLALEKEKPAEEKPKEDKPA). Disordered stretches follow at residues 63-137 (NDGH…QGTV) and 301-324 (VKTDNQEGVKTEDTPAEKETGPEV). Residues 112–124 (AAKPETPKTVTPE) show a composition bias toward low complexity. Basic and acidic residues-rich tracts occupy residues 127 to 137 (TVEKKEQQGTV) and 304 to 324 (DNQEGVKTEDTPAEKETGPEV). Residues aspartate 577, asparagine 579, aspartate 581, lysine 583, and aspartate 588 each coordinate Ca(2+). Positions 602–893 (GWKKVKDITA…DVMTKYFQHF (292 aa)) are catalytic. Substrate is bound at residue aspartate 658. Catalysis depends on aspartate 764, which acts as the Nucleophile. Glutamate 796 functions as the Proton donor/acceptor in the catalytic mechanism. Ca(2+)-binding residues include aspartate 1233, glutamate 1235, glutamate 1281, tryptophan 1284, and aspartate 1411. An LPXTG sorting signal motif is present at residues 1735 to 1739 (LPATG). At threonine 1738 the chain carries Pentaglycyl murein peptidoglycan amidated threonine. The propeptide at 1739-1767 (GESQFDTALFLASVSLALSALFVVKTKKD) is removed by sortase.

Belongs to the glycosyl hydrolase 101 family. A subfamily.

The protein localises to the secreted. It is found in the cell wall. It catalyses the reaction a 3-O-[beta-D-galactosyl-(1-&gt;3)-N-acetyl-alpha-D-galactosaminyl]-L-threonyl-[protein] + H2O = beta-D-galactosyl-(1-&gt;3)-N-acetyl-D-galactosamine + L-threonyl-[protein]. It carries out the reaction a 3-O-[beta-D-galactosyl-(1-&gt;3)-N-acetyl-alpha-D-galactosaminyl]-L-seryl-[protein] + H2O = beta-D-galactosyl-(1-&gt;3)-N-acetyl-D-galactosamine + L-seryl-[protein]. Involved in the breakdown of mucin-type O-linked glycans. Specifically removes the T-antigen disaccharide (Gal-beta-1,3-GalNAc-alpha) from extracellular host glycoproteins. Representative of a broadly important class of virulence factors. The sequence is that of Endo-alpha-N-acetylgalactosaminidase from Streptococcus pneumoniae (strain ATCC BAA-255 / R6).